Here is a 213-residue protein sequence, read N- to C-terminus: Uridine kinase (213 aa).

Residue 12–19 coordinates ATP; sequence GGSCSGKT.

This sequence belongs to the uridine kinase family.

The protein resides in the cytoplasm. The catalysed reaction is uridine + ATP = UMP + ADP + H(+). It carries out the reaction cytidine + ATP = CMP + ADP + H(+). It functions in the pathway pyrimidine metabolism; CTP biosynthesis via salvage pathway; CTP from cytidine: step 1/3. The protein operates within pyrimidine metabolism; UMP biosynthesis via salvage pathway; UMP from uridine: step 1/1. The polypeptide is Uridine kinase (udk) (Mycoplasma genitalium (strain ATCC 33530 / DSM 19775 / NCTC 10195 / G37) (Mycoplasmoides genitalium)).